The sequence spans 220 residues: Probable 26S proteasome regulatory subunit p27 (220 aa).

The 78-residue stretch at Ala-119 to Ile-196 folds into the PDZ domain.

This sequence belongs to the proteasome subunit p27 family. Part of a transient complex containing NAS2, RPT4 and RPT5 formed during the assembly of the 26S proteasome.

Its function is as follows. Acts as a chaperone during the assembly of the 26S proteasome, specifically of the base subcomplex of the 19S regulatory complex (RC). During the base subcomplex assembly is part of a NAS2:RPT4:RPT5 module; NAS2 is released during the further base assembly process. This is Probable 26S proteasome regulatory subunit p27 (NAS2) from Saccharomyces cerevisiae (strain ATCC 204508 / S288c) (Baker's yeast).